Reading from the N-terminus, the 176-residue chain is Nucleoside triphosphate/diphosphate phosphatase (176 aa).

Catalysis depends on R23, which acts as the Proton donor. Mg(2+) contacts are provided by N87, D103, D105, D107, D120, and E123.

The protein belongs to the Ntdp family. Requires Mg(2+) as cofactor.

It catalyses the reaction a ribonucleoside 5'-triphosphate + H2O = a ribonucleoside 5'-diphosphate + phosphate + H(+). The enzyme catalyses a ribonucleoside 5'-diphosphate + H2O = a ribonucleoside 5'-phosphate + phosphate + H(+). Its function is as follows. Has nucleoside phosphatase activity towards nucleoside triphosphates and nucleoside diphosphates. The chain is Nucleoside triphosphate/diphosphate phosphatase (ygaC) from Bacillus subtilis (strain 168).